Here is an 82-residue protein sequence, read N- to C-terminus: MAGGSTGERPFGDIITSIRYWVIHSITIPALFIAGWLFVSTGLAYDVFGTPRPNEYYTEQRQELPILSDRFESKQQIDDFIK.

The chain crosses the membrane as a helical span at residues 22–36 (VIHSITIPALFIAGW). Residue His-24 coordinates heme.

This sequence belongs to the PsbE/PsbF family. As to quaternary structure, heterodimer of an alpha subunit and a beta subunit. PSII is composed of 1 copy each of membrane proteins PsbA, PsbB, PsbC, PsbD, PsbE, PsbF, PsbH, PsbI, PsbJ, PsbK, PsbL, PsbM, PsbT, PsbX, PsbY, PsbZ, Psb30/Ycf12, peripheral proteins PsbO, CyanoQ (PsbQ), PsbU, PsbV and a large number of cofactors. It forms dimeric complexes. Heme b is required as a cofactor.

The protein resides in the cellular thylakoid membrane. Its function is as follows. This b-type cytochrome is tightly associated with the reaction center of photosystem II (PSII). PSII is a light-driven water:plastoquinone oxidoreductase that uses light energy to abstract electrons from H(2)O, generating O(2) and a proton gradient subsequently used for ATP formation. It consists of a core antenna complex that captures photons, and an electron transfer chain that converts photonic excitation into a charge separation. The sequence is that of Cytochrome b559 subunit alpha from Trichodesmium erythraeum (strain IMS101).